The sequence spans 268 residues: MGSADDQASRMREGTVEVVGAGEAGRARDRSPSGSARGRGGVRTALRARLAAGLADAGFDLEDVTVTRAGSRSVVRVVVDRDGGVDLDAVADASRLASELLDAAETDGQGLVAGPYVLEVTSPGVERPLTEPRHWRRAIGRLVTVRDRDGIVLAGRVLSADESGADLAVATDPARPGRPPRRRLARVTFAQVARATVEVEFSAEAYDDLSIESVETPSLSAVLVEPGETADLGYGEPDDDLPAAPGRESNDDGREAGPRGAAGKEMTR.

Disordered regions lie at residues 1-41 and 223-268; these read MGSA…GRGG and LVEP…EMTR. Residues 32-41 show a composition bias toward low complexity; sequence PSGSARGRGG. Residues 248 to 257 are compositionally biased toward basic and acidic residues; that stretch reads ESNDDGREAG.

Belongs to the RimP family.

The protein localises to the cytoplasm. In terms of biological role, required for maturation of 30S ribosomal subunits. The polypeptide is Ribosome maturation factor RimP (Frankia casuarinae (strain DSM 45818 / CECT 9043 / HFP020203 / CcI3)).